Consider the following 163-residue polypeptide: Troponin C, skeletal muscle (163 aa).

Ala-2 is modified (blocked amino end (Ala)). 4 consecutive EF-hand domains span residues 18 to 53 (EMIA…LGQN), 54 to 89 (PTKE…QMKE), 94 to 129 (KSEE…TGEH), and 130 to 163 (VTEE…EGVQ). The Ca(2+) site is built by Asp-31, Asp-33, Asp-37, Glu-42, Asp-67, Asp-69, Ser-71, Thr-73, Glu-78, Asp-107, Asn-109, Asp-111, Glu-118, Asp-143, Asn-145, Asp-147, Arg-149, and Glu-154.

This sequence belongs to the troponin C family.

Its function is as follows. Troponin is the central regulatory protein of striated muscle contraction. Tn consists of three components: Tn-I which is the inhibitor of actomyosin ATPase, Tn-T which contains the binding site for tropomyosin and Tn-C. The binding of calcium to Tn-C abolishes the inhibitory action of Tn on actin filaments. The protein is Troponin C, skeletal muscle (TNNC2) of Gallus gallus (Chicken).